The chain runs to 649 residues: MHVTLPDGKQLDLQAGATALDVARALGPRLAQDALAALVNGELMDLMTPLPEGAQVRLITKKNPGDAAPVFRHSLGHVLSQAVGEFYQRKGYPREAVKRGVGPAIENGFYQDFDLPEPLKEEDLPEIEAIMREIIGRGLDIVRQDVGKAAALKHFSYDPYKVELIQELPENEPVTFYAQGDYVDLCRGPHFPNTGKLPGAFKLMSTSGAYWRGNEKNPILQRVYGVAFATQKELDEYLERLEEARRRDHRKLGRELELFLIDPLVGKGLPMWLPNGTVLREELTRFLREQQFQRDYQGVVTPNIGNLDLFRTSGHYPYYSDSQFEPLSVDEEQYMLKPMNCPFHIRIYASKPRSYRDLPVRLAEFGTVYRYEMSGELNGLTRVRGFTQDDAHIFARPDQLKKEFLDVLDLTVLVLKTFGMNDVRFRVGVRDPASDKYVGDPAQWEVAERQIIEAVEEVGLPYTVEPGDAAFYGPKLDFVVKDVLGREWQLGTIQVDYNLPERFDLTYTGEDGQEHRPVMIHRAPFGSLERFVGILIEHYGGDFPFWLAPRQIMLIPIADRHNAYAQTLANEFKAAGLRAEVDDSNNRMNAKVRNAELHKIPVMLIVGDQEEARREVSVRERTPEGHKERKGVDFTALLAELQERYRTRA.

The TGS domain maps to 1-60 (MHVTLPDGKQLDLQAGATALDVARALGPRLAQDALAALVNGELMDLMTPLPEGAQVRLIT). A catalytic region spans residues 248-544 (DHRKLGRELE…LIEHYGGDFP (297 aa)). Residues Cys-341, His-392, and His-521 each contribute to the Zn(2+) site.

The protein belongs to the class-II aminoacyl-tRNA synthetase family. In terms of assembly, homodimer. Zn(2+) is required as a cofactor.

It localises to the cytoplasm. The enzyme catalyses tRNA(Thr) + L-threonine + ATP = L-threonyl-tRNA(Thr) + AMP + diphosphate + H(+). Catalyzes the attachment of threonine to tRNA(Thr) in a two-step reaction: L-threonine is first activated by ATP to form Thr-AMP and then transferred to the acceptor end of tRNA(Thr). Also edits incorrectly charged L-seryl-tRNA(Thr). The sequence is that of Threonine--tRNA ligase from Deinococcus geothermalis (strain DSM 11300 / CIP 105573 / AG-3a).